A 492-amino-acid chain; its full sequence is MO25-like protein 3 (492 aa).

Residues 442-492 (SRAGIRFGETRNVKGSPRSRSQSPRPPTGPEPSPRTTSYQNVRFPPEDSSR) are disordered. The segment covering 465-474 (PRPPTGPEPS) has biased composition (pro residues).

This sequence belongs to the Mo25 family.

This Caenorhabditis briggsae protein is MO25-like protein 3.